A 360-amino-acid polypeptide reads, in one-letter code: Mannonate dehydratase (360 aa).

Belongs to the mannonate dehydratase family. Requires Fe(2+) as cofactor. Mn(2+) serves as cofactor.

It catalyses the reaction D-mannonate = 2-dehydro-3-deoxy-D-gluconate + H2O. The protein operates within carbohydrate metabolism; pentose and glucuronate interconversion. In terms of biological role, catalyzes the dehydration of D-mannonate. This is Mannonate dehydratase from Thermotoga sp. (strain RQ2).